A 636-amino-acid polypeptide reads, in one-letter code: Endoglucanase 4 (636 aa).

Positions 1–25 (MTRRWSFLVQCFTFKKKEGVRSRYM) are cleaved as a signal peptide. Asp82 serves as the catalytic Nucleophile. Catalysis depends on residues His400, Asp438, and Glu447. The region spanning 478–635 (KVEDEFFVEA…GDLVFGTLPN (158 aa)) is the CBM3 domain.

The protein belongs to the glycosyl hydrolase 9 (cellulase E) family.

It localises to the secreted. It carries out the reaction Endohydrolysis of (1-&gt;4)-beta-D-glucosidic linkages in cellulose, lichenin and cereal beta-D-glucans.. The polypeptide is Endoglucanase 4 (Bacillus sp. (strain KSM-522)).